Consider the following 96-residue polypeptide: Integration host factor subunit beta (96 aa).

Residues 59 to 78 are disordered; the sequence is RVGRNPKTGETVSLPGKYVP.

This sequence belongs to the bacterial histone-like protein family. As to quaternary structure, heterodimer of an alpha and a beta chain.

Functionally, this protein is one of the two subunits of integration host factor, a specific DNA-binding protein that functions in genetic recombination as well as in transcriptional and translational control. In Thioalkalivibrio sulfidiphilus (strain HL-EbGR7), this protein is Integration host factor subunit beta.